Here is a 140-residue protein sequence, read N- to C-terminus: MAIQRTFSIIKPDATKRNLTGAINAKLEAAGLRIVAQKRIHLSKAQAAVFYAVHKERPFYDELCEFMASEPIVVQVLEGEDAIAKNREVMGATNPAEAAEGTIRKEFALSIGENSVHGSDAEDTAKEEIAYFFSGLELVG.

Residues Lys-11, Phe-59, Arg-87, Thr-93, Arg-104, and Asn-114 each contribute to the ATP site. His-117 (pros-phosphohistidine intermediate) is an active-site residue.

Belongs to the NDK family. As to quaternary structure, homotetramer. It depends on Mg(2+) as a cofactor.

The protein localises to the cytoplasm. It catalyses the reaction a 2'-deoxyribonucleoside 5'-diphosphate + ATP = a 2'-deoxyribonucleoside 5'-triphosphate + ADP. The catalysed reaction is a ribonucleoside 5'-diphosphate + ATP = a ribonucleoside 5'-triphosphate + ADP. Major role in the synthesis of nucleoside triphosphates other than ATP. The ATP gamma phosphate is transferred to the NDP beta phosphate via a ping-pong mechanism, using a phosphorylated active-site intermediate. In Rhodovulum sulfidophilum (Rhodobacter sulfidophilus), this protein is Nucleoside diphosphate kinase.